A 612-amino-acid polypeptide reads, in one-letter code: Dihydroxy-acid dehydratase (612 aa).

Residue D81 coordinates Mg(2+). C122 lines the [2Fe-2S] cluster pocket. Mg(2+)-binding residues include D123 and K124. The residue at position 124 (K124) is an N6-carboxylysine. C195 lines the [2Fe-2S] cluster pocket. Mg(2+) is bound at residue E491. S517 (proton acceptor) is an active-site residue.

The protein belongs to the IlvD/Edd family. Homodimer. [2Fe-2S] cluster serves as cofactor. The cofactor is Mg(2+).

The enzyme catalyses (2R)-2,3-dihydroxy-3-methylbutanoate = 3-methyl-2-oxobutanoate + H2O. It catalyses the reaction (2R,3R)-2,3-dihydroxy-3-methylpentanoate = (S)-3-methyl-2-oxopentanoate + H2O. The protein operates within amino-acid biosynthesis; L-isoleucine biosynthesis; L-isoleucine from 2-oxobutanoate: step 3/4. It functions in the pathway amino-acid biosynthesis; L-valine biosynthesis; L-valine from pyruvate: step 3/4. In terms of biological role, functions in the biosynthesis of branched-chain amino acids. Catalyzes the dehydration of (2R,3R)-2,3-dihydroxy-3-methylpentanoate (2,3-dihydroxy-3-methylvalerate) into 2-oxo-3-methylpentanoate (2-oxo-3-methylvalerate) and of (2R)-2,3-dihydroxy-3-methylbutanoate (2,3-dihydroxyisovalerate) into 2-oxo-3-methylbutanoate (2-oxoisovalerate), the penultimate precursor to L-isoleucine and L-valine, respectively. This is Dihydroxy-acid dehydratase from Buchnera aphidicola subsp. Baizongia pistaciae (strain Bp).